The sequence spans 322 residues: uncharacterized protein (322 aa).

A helical membrane pass occupies residues 212-234; sequence VCALLVGAISVATAGAAFSIIIV.

It localises to the membrane. This is an uncharacterized protein from Rickettsia prowazekii (strain Madrid E).